Consider the following 488-residue polypeptide: Glutamyl-tRNA(Gln) amidotransferase subunit A (488 aa).

Catalysis depends on charge relay system residues Lys-77 and Ser-152. The active-site Acyl-ester intermediate is the Ser-176.

This sequence belongs to the amidase family. GatA subfamily. Heterotrimer of A, B and C subunits.

It carries out the reaction L-glutamyl-tRNA(Gln) + L-glutamine + ATP + H2O = L-glutaminyl-tRNA(Gln) + L-glutamate + ADP + phosphate + H(+). In terms of biological role, allows the formation of correctly charged Gln-tRNA(Gln) through the transamidation of misacylated Glu-tRNA(Gln) in organisms which lack glutaminyl-tRNA synthetase. The reaction takes place in the presence of glutamine and ATP through an activated gamma-phospho-Glu-tRNA(Gln). The chain is Glutamyl-tRNA(Gln) amidotransferase subunit A from Streptococcus pyogenes serotype M18 (strain MGAS8232).